A 267-amino-acid chain; its full sequence is Proenkephalin-A (267 aa).

The signal sequence occupies residues 1 to 24 (MARFLTLCTWLLLLGPGLLATVRA). 3 disulfide bridges follow: Cys26–Cys48, Cys30–Cys52, and Cys33–Cys65. The segment covering 163-175 (TGDNRERSHHQDG) has biased composition (basic and acidic residues). The tract at residues 163-182 (TGDNRERSHHQDGSDNEEEV) is disordered. 2 consecutive propeptides follow at residues 196-207 (SPQLEDEAKELQ) and 217-227 (VGRPEWWMDYQ). A Phosphoserine modification is found at Ser251.

Belongs to the opioid neuropeptide precursor family. In terms of processing, proenkephalin-A is cleaved by CTSL to generate Met-enkephalin. Processed and degraded by ACE. Post-translationally, probably cleaved by ACE. In terms of processing, processed by ACE to generate Met-enkephalin in the nucleus accumbens of the brain. The N-terminal domain contains 6 conserved cysteines thought to be involved in disulfide bonding and/or processing.

The protein localises to the cytoplasmic vesicle. Its subcellular location is the secretory vesicle. The protein resides in the chromaffin granule lumen. It is found in the secreted. Neuropeptide that competes with and mimic the effects of opiate drugs. They play a role in a number of physiologic functions, including pain perception and responses to stress. In terms of biological role, met-enkephalin-Arg-Phe neuropeptide acts as a strong ligand of Mu-type opioid receptor OPRM1. Met-enkephalin-Arg-Phe-binding to OPRM1 in the nucleus accumbens of the brain increases activation of OPRM1, leading to long-term synaptic depression of glutamate release. Its function is as follows. Increases glutamate release in the striatum and decreases GABA concentration in the striatum. Functionally, increases glutamate release in the striatum. In Homo sapiens (Human), this protein is Proenkephalin-A.